The following is a 257-amino-acid chain: Dihydroorotate dehydrogenase B (NAD(+)), electron transfer subunit (257 aa).

One can recognise an FAD-binding FR-type domain in the interval 2 to 102; it reads IGRERMTVAS…LGPLGNGFPL (101 aa). Residues 53–56, 70–72, and 77–78 contribute to the FAD site; these read RPLS, IYR, and GT. 4 residues coordinate [2Fe-2S] cluster: Cys-221, Cys-226, Cys-229, and Cys-244.

It belongs to the PyrK family. In terms of assembly, heterotetramer of 2 PyrK and 2 PyrD type B subunits. It depends on [2Fe-2S] cluster as a cofactor. FAD is required as a cofactor.

It functions in the pathway pyrimidine metabolism; UMP biosynthesis via de novo pathway; orotate from (S)-dihydroorotate (NAD(+) route): step 1/1. Functionally, responsible for channeling the electrons from the oxidation of dihydroorotate from the FMN redox center in the PyrD type B subunit to the ultimate electron acceptor NAD(+). In Geobacillus kaustophilus (strain HTA426), this protein is Dihydroorotate dehydrogenase B (NAD(+)), electron transfer subunit.